Here is a 267-residue protein sequence, read N- to C-terminus: 2-keto-3-deoxy-L-rhamnonate aldolase (267 aa).

The active-site Proton acceptor is the His49. Position 151 (Gln151) interacts with substrate. A Mg(2+)-binding site is contributed by Glu153. Residues Ala178 and Asp179 each coordinate substrate. Position 179 (Asp179) interacts with Mg(2+).

It belongs to the HpcH/HpaI aldolase family. KDR aldolase subfamily. As to quaternary structure, homohexamer. Mg(2+) is required as a cofactor.

It catalyses the reaction 2-dehydro-3-deoxy-L-rhamnonate = (S)-lactaldehyde + pyruvate. Its function is as follows. Catalyzes the reversible retro-aldol cleavage of 2-keto-3-deoxy-L-rhamnonate (KDR) to pyruvate and lactaldehyde. This chain is 2-keto-3-deoxy-L-rhamnonate aldolase, found in Salmonella enteritidis PT4 (strain P125109).